The sequence spans 356 residues: Phosphate acyltransferase (356 aa).

Belongs to the PlsX family. As to quaternary structure, homodimer. Probably interacts with PlsY.

It is found in the cytoplasm. The enzyme catalyses a fatty acyl-[ACP] + phosphate = an acyl phosphate + holo-[ACP]. The protein operates within lipid metabolism; phospholipid metabolism. In terms of biological role, catalyzes the reversible formation of acyl-phosphate (acyl-PO(4)) from acyl-[acyl-carrier-protein] (acyl-ACP). This enzyme utilizes acyl-ACP as fatty acyl donor, but not acyl-CoA. The sequence is that of Phosphate acyltransferase from Escherichia coli (strain K12 / DH10B).